A 137-amino-acid chain; its full sequence is Large ribosomal subunit protein eL28 (137 aa).

S2 is subject to N-acetylserine. Residues K58 and K65 each participate in a glycyl lysine isopeptide (Lys-Gly) (interchain with G-Cter in SUMO2) cross-link. S115 bears the Phosphoserine mark.

Belongs to the eukaryotic ribosomal protein eL28 family. In terms of assembly, component of the large ribosomal subunit.

The protein localises to the cytoplasm. Its function is as follows. Component of the large ribosomal subunit. The ribosome is a large ribonucleoprotein complex responsible for the synthesis of proteins in the cell. This chain is Large ribosomal subunit protein eL28 (RPL28), found in Oryctolagus cuniculus (Rabbit).